The sequence spans 843 residues: N-acetyltransferase ESCO1 (843 aa).

Positions 1–78 (MSIQEKSKEN…SASCSADKTA (78 aa)) are disordered. Acidic residues predominate over residues 18 to 28 (SEDENLEEEVE). Residues 66–78 (STRSASCSADKTA) are compositionally biased toward polar residues. Residue serine 202 is modified to Phosphoserine. The interval 262–300 (NELRKSAHTQVSTSTKRPQIPLPLVPEHSDDQELEQAGK) is disordered. Positions 269-278 (HTQVSTSTKR) are enriched in polar residues. A Glycyl lysine isopeptide (Lys-Gly) (interchain with G-Cter in SUMO2) cross-link involves residue lysine 335. Phosphoserine is present on serine 415. Positions 546–584 (DRTFPGSAPNQQHSVLSDEASINRKNRDVPPNHSQLKHD) are disordered. The span at 566 to 584 (SINRKNRDVPPNHSQLKHD) shows a compositional bias: basic and acidic residues. The CCHH-type zinc finger occupies 620-644 (VSCNICGMLYTASNPEDETQHLLFH). Acetyl-CoA contacts are provided by residues 775–777 (IWV), 783–788 (RKKIAS), and 815–817 (TPD).

Belongs to the acetyltransferase family. ECO subfamily. In terms of assembly, the subunit structure is controversial. Monomer. Homodimer. Phosphorylated during mitosis.

The protein localises to the nucleus. It is found in the chromosome. It carries out the reaction L-lysyl-[protein] + acetyl-CoA = N(6)-acetyl-L-lysyl-[protein] + CoA + H(+). Its function is as follows. Acetyltransferase required for the establishment of sister chromatid cohesion. Couples the processes of cohesion and DNA replication to ensure that only sister chromatids become paired together. In contrast to the structural cohesins, the deposition and establishment factors are required only during S phase. Acts by mediating the acetylation of cohesin component SMC3. The sequence is that of N-acetyltransferase ESCO1 (Esco1) from Mus musculus (Mouse).